The primary structure comprises 968 residues: Glycine dehydrogenase (decarboxylating) (968 aa).

Lys717 is subject to N6-(pyridoxal phosphate)lysine.

Belongs to the GcvP family. The glycine cleavage system is composed of four proteins: P, T, L and H. Pyridoxal 5'-phosphate serves as cofactor.

It catalyses the reaction N(6)-[(R)-lipoyl]-L-lysyl-[glycine-cleavage complex H protein] + glycine + H(+) = N(6)-[(R)-S(8)-aminomethyldihydrolipoyl]-L-lysyl-[glycine-cleavage complex H protein] + CO2. Functionally, the glycine cleavage system catalyzes the degradation of glycine. The P protein binds the alpha-amino group of glycine through its pyridoxal phosphate cofactor; CO(2) is released and the remaining methylamine moiety is then transferred to the lipoamide cofactor of the H protein. In Tropheryma whipplei (strain TW08/27) (Whipple's bacillus), this protein is Glycine dehydrogenase (decarboxylating).